Consider the following 151-residue polypeptide: Pollen allergen Sal k 5.0101 (151 aa).

Cystine bridges form between C17/C88, C20/C132, and C41/C76. Residue N43 is glycosylated (N-linked (GlcNAc...) asparagine).

Belongs to the Ole e I family. N-glycosylated. Contains fucose monosaccharides in the glycan structure. In terms of tissue distribution, expressed in pollen (at protein level).

It localises to the secreted. This Kali turgidum (Prickly saltwort) protein is Pollen allergen Sal k 5.0101.